The chain runs to 329 residues: Probable cell division protein WhiA (329 aa).

The segment at residues 276–309 (SLEELGKVHEPPLTKDAIAGRIRRLLALADKTAR) is a DNA-binding region (H-T-H motif). Residues 308–329 (ARSNGEPTTLESLPVEMRDDRG) are disordered. Positions 309-318 (RSNGEPTTLE) are enriched in polar residues.

This sequence belongs to the WhiA family.

Involved in cell division and chromosome segregation. The chain is Probable cell division protein WhiA from Cutibacterium acnes (strain DSM 16379 / KPA171202) (Propionibacterium acnes).